An 859-amino-acid polypeptide reads, in one-letter code: Ubiquitin carboxyl-terminal hydrolase 23 (859 aa).

Polar residues predominate over residues 1–24; sequence MEVATSSTEITIQTDRDPSSNNNG. Residues 1–26 form a disordered region; sequence MEVATSSTEITIQTDRDPSSNNNGSC. A USP domain is found at 107–410; the sequence is AGLQNLGNTC…KAYMLFYVRD (304 aa). C116 functions as the Nucleophile in the catalytic mechanism. Residue H369 is the Proton acceptor of the active site. Disordered stretches follow at residues 722–749 and 822–859; these read MISS…ASQN and EESY…AYRI.

This sequence belongs to the peptidase C19 family.

The catalysed reaction is Thiol-dependent hydrolysis of ester, thioester, amide, peptide and isopeptide bonds formed by the C-terminal Gly of ubiquitin (a 76-residue protein attached to proteins as an intracellular targeting signal).. Its function is as follows. Recognizes and hydrolyzes the peptide bond at the C-terminal Gly of ubiquitin. Involved in the processing of poly-ubiquitin precursors as well as that of ubiquitinated proteins. The sequence is that of Ubiquitin carboxyl-terminal hydrolase 23 (UBP23) from Arabidopsis thaliana (Mouse-ear cress).